A 291-amino-acid chain; its full sequence is U7 snRNA-associated Sm-like protein LSm11 (291 aa).

The tract at residues 55-84 (ARGRARGAQRGQSRGPGGKRKGRKPEPDPE) is disordered. The Sm domain occupies 124-199 (SPLGELNRCV…LTLTRLFDRL (76 aa)). The SM stretch occupies residues 155 to 289 (GFIVAFDKFW…RGENVLLVHI (135 aa)). Positions 203 to 266 (EPGSHDPAKG…RRNRKEKVDY (64 aa)) are disordered. A compositionally biased stretch (basic residues) spans 251-261 (NRPKQRRRNRK).

The protein belongs to the snRNP Sm proteins family. Component of the heptameric ring U7 snRNP complex.

The protein localises to the nucleus. Functionally, component of the U7 snRNP complex that is involved in the histone 3'-end pre-mRNA processing. Increases U7 snRNA levels but not histone 3'-end pre-mRNA processing activity, when overexpressed. Binds specifically to the Sm-binding site of U7 snRNA. In Xenopus laevis (African clawed frog), this protein is U7 snRNA-associated Sm-like protein LSm11.